Reading from the N-terminus, the 402-residue chain is Putative F-box protein At4g22180 (402 aa).

The F-box domain maps to 18–64; the sequence is PNSWSELPLDLLTAVFERLSYANFQRAKSVCSSWHSGSRQSVPIQIP.

The sequence is that of Putative F-box protein At4g22180 from Arabidopsis thaliana (Mouse-ear cress).